The sequence spans 880 residues: DNA double-strand break repair Rad50 ATPase (880 aa).

ATP contacts are provided by residues R12, 32–38 (NGSGKSS), and Q138. Coiled coils occupy residues 225-336 (GELE…VIKE) and 391-744 (GEVI…QALN). Positions 397-494 (LESLEKERTE…NLRKLEIKLR (98 aa)) constitute a Zinc-hook domain. Zn(2+) contacts are provided by C442 and C445. 789 to 794 (FLSGGE) lines the ATP pocket.

This sequence belongs to the SMC family. RAD50 subfamily. In terms of assembly, homodimer. Forms a heterotetramer composed of two Mre11 subunits and two Rad50 subunits. It depends on Zn(2+) as a cofactor.

In terms of biological role, part of the Rad50/Mre11 complex, which is involved in the early steps of DNA double-strand break (DSB) repair. The complex may facilitate opening of the processed DNA ends to aid in the recruitment of HerA and NurA. Rad50 controls the balance between DNA end bridging and DNA resection via ATP-dependent structural rearrangements of the Rad50/Mre11 complex. This Pyrococcus abyssi (strain GE5 / Orsay) protein is DNA double-strand break repair Rad50 ATPase.